The following is a 295-amino-acid chain: tRNA pseudouridine synthase B (295 aa).

The active-site Nucleophile is Asp42.

This sequence belongs to the pseudouridine synthase TruB family. Type 1 subfamily.

The catalysed reaction is uridine(55) in tRNA = pseudouridine(55) in tRNA. Its function is as follows. Responsible for synthesis of pseudouridine from uracil-55 in the psi GC loop of transfer RNAs. The sequence is that of tRNA pseudouridine synthase B from Cutibacterium acnes (strain DSM 16379 / KPA171202) (Propionibacterium acnes).